Reading from the N-terminus, the 99-residue chain is Small ribosomal subunit protein bS20 (99 aa).

It belongs to the bacterial ribosomal protein bS20 family.

Its function is as follows. Binds directly to 16S ribosomal RNA. The sequence is that of Small ribosomal subunit protein bS20 from Chlamydia pneumoniae (Chlamydophila pneumoniae).